The following is a 125-amino-acid chain: MADLQKIVDDLSSLTVLEAAELAKLLEEKWGVSAAAAVAVAAAPGAAAGGAPAEEKTEFQVVLAAAGDKKIEVIKEVRAITGLGLKEAKDLVEGAPKPLKEGVAKDEAEKIKAALEKAGAKVELK.

Belongs to the bacterial ribosomal protein bL12 family. In terms of assembly, homodimer. Part of the ribosomal stalk of the 50S ribosomal subunit. Forms a multimeric L10(L12)X complex, where L10 forms an elongated spine to which 2 to 4 L12 dimers bind in a sequential fashion. Binds GTP-bound translation factors.

In terms of biological role, forms part of the ribosomal stalk which helps the ribosome interact with GTP-bound translation factors. Is thus essential for accurate translation. The protein is Large ribosomal subunit protein bL12 of Afipia carboxidovorans (strain ATCC 49405 / DSM 1227 / KCTC 32145 / OM5) (Oligotropha carboxidovorans).